Reading from the N-terminus, the 136-residue chain is Large ribosomal subunit protein uL16 (136 aa).

The protein belongs to the universal ribosomal protein uL16 family. In terms of assembly, part of the 50S ribosomal subunit.

Binds 23S rRNA and is also seen to make contacts with the A and possibly P site tRNAs. The polypeptide is Large ribosomal subunit protein uL16 (Pelagibacter ubique (strain HTCC1062)).